Consider the following 728-residue polypeptide: Catalase-peroxidase 1 (728 aa).

A signal peptide spans 1 to 16; the sequence is MDKAQHTQGKCPVAHG. A cross-link (tryptophyl-tyrosyl-methioninium (Trp-Tyr) (with M-251)) is located at residues 97–225; it reads WHSAGTYRMA…LAAVMMGLIY (129 aa). H98 serves as the catalytic Proton acceptor. A cross-link (tryptophyl-tyrosyl-methioninium (Tyr-Met) (with W-97)) is located at residues 225–251; it reads YVNPEGVDGQPDPLKTAQDIRVTFERM. H266 provides a ligand contact to heme b.

Belongs to the peroxidase family. Peroxidase/catalase subfamily. Homodimer or homotetramer. Heme b serves as cofactor. Formation of the three residue Trp-Tyr-Met cross-link is important for the catalase, but not the peroxidase activity of the enzyme.

The enzyme catalyses H2O2 + AH2 = A + 2 H2O. It carries out the reaction 2 H2O2 = O2 + 2 H2O. Functionally, bifunctional enzyme with both catalase and broad-spectrum peroxidase activity. The polypeptide is Catalase-peroxidase 1 (Shewanella frigidimarina (strain NCIMB 400)).